A 340-amino-acid polypeptide reads, in one-letter code: Deubiquitinase SseL (340 aa).

The active site involves H223. The Nucleophile role is filled by C285.

Belongs to the peptidase C79 family.

The protein resides in the secreted. It is found in the host cytoplasm. In terms of biological role, effector proteins function to alter host cell physiology and promote bacterial survival in host tissues. This protease targets the host cell ubiquitin pathway by acting as a deubiquitinase in infected host cells. Specifically hydrolyzes mono- and polyubiquitin substrates in vitro with a preference for 'Lys-63'-linked ubiquitin chains, suggesting that it interferes with a signaling pathway rather than inhibiting proteasomal-dependent degradation of its targets. Does not possess desumoylating activity. Is required for the Salmonella-induced delayed cytotoxicity in macrophages and full virulence. Is not required for intracellular bacterial replication. The polypeptide is Deubiquitinase SseL (sseL) (Salmonella typhimurium (strain LT2 / SGSC1412 / ATCC 700720)).